The chain runs to 344 residues: Thioredoxin domain-containing protein 15 (344 aa).

A signal peptide spans 1 to 20; that stretch reads MQLLCWWQVLLWVLGLPAHG. At 21–305 the chain is on the extracellular side; that stretch reads LEVAEDSGHP…GPLPSTLIKT (285 aa). 2 disordered regions span residues 55–119 and 136–156; these read DHRD…FGLQ and GVTEAEPVATEDANSTDSLKS. Residues 88–97 show a composition bias toward basic and acidic residues; the sequence is EDQRSPEAHD. The Thioredoxin domain occupies 163 to 280; sequence ERNVTGLENF…LKIFIFNQTG (118 aa). N-linked (GlcNAc...) asparagine glycans are attached at residues Asn-171, Asn-178, Asn-190, and Asn-277. The chain crosses the membrane as a helical span at residues 306–326; sequence VDWLLVFSLFFLISFIMYATI. At 327-344 the chain is on the cytoplasmic side; it reads RTESIRWLIPGQEQEHAE.

Its subcellular location is the cell projection. It localises to the cilium membrane. In terms of biological role, acts as a positive regulator of ciliary hedgehog signaling. Required for cilia biogenesis. This chain is Thioredoxin domain-containing protein 15 (Txndc15), found in Mus musculus (Mouse).